We begin with the raw amino-acid sequence, 141 residues long: Ribonuclease P protein component (141 aa).

Disordered regions lie at residues 37-56 and 114-141; these read RTEE…VGFT and RRIT…VNGK. A compositionally biased stretch (basic and acidic residues) spans 114-124; sequence RRITAKGERRS.

Belongs to the RnpA family. As to quaternary structure, consists of a catalytic RNA component (M1 or rnpB) and a protein subunit.

It catalyses the reaction Endonucleolytic cleavage of RNA, removing 5'-extranucleotides from tRNA precursor.. Its function is as follows. RNaseP catalyzes the removal of the 5'-leader sequence from pre-tRNA to produce the mature 5'-terminus. It can also cleave other RNA substrates such as 4.5S RNA. The protein component plays an auxiliary but essential role in vivo by binding to the 5'-leader sequence and broadening the substrate specificity of the ribozyme. This Brucella melitensis biotype 2 (strain ATCC 23457) protein is Ribonuclease P protein component.